The primary structure comprises 160 residues: Putative transcriptional regulator protein YobU (160 aa).

The chain is Putative transcriptional regulator protein YobU (yobU) from Bacillus subtilis (strain 168).